The primary structure comprises 424 residues: Tubulin-specific chaperone cofactor E-like protein (424 aa).

Phosphoserine is present on residues S18 and S41. LRR repeat units lie at residues 73–98 (CAHV…IVSN), 99–123 (VPQL…TCAG), 124–147 (SFSG…HMIL), 150–172 (LPDL…PSIC), 173–197 (CHSL…KLGV), 199–224 (FPSL…SLAR), and 226–250 (FPNL…KLNS). The 42-residue stretch at 262 to 303 (IPLLQPYTTEERRKLVIARLPSVSKLNGSVVTDGEREDSERF) folds into the LRRCT domain. In terms of domain architecture, Ubiquitin-like spans 334–424 (AEVDLRPQSS…DKIYVESKTK (91 aa)). The stretch at 349–375 (HFNDQVEEMSIRLDQTVAELKKQLKTL) forms a coiled coil.

Abundantly expressed in testis, but is also present in several tissues at a much lower level.

It is found in the cytoplasm. The protein localises to the cytoskeleton. Its function is as follows. Acts as a regulator of tubulin stability. In Homo sapiens (Human), this protein is Tubulin-specific chaperone cofactor E-like protein (TBCEL).